Consider the following 714-residue polypeptide: EtfAB:quinone oxidoreductase (714 aa).

The next 6 membrane-spanning stretches (helical) occupy residues 25–45 (YEWLIYVIMLIPVSVFLFGFW), 87–107 (AGWMHAFLFWGFLVLFLAAGI), 125–145 (IGFSWVVDVLGFLALIGVMVL), 164–184 (DGWIILLIFAILLTGYFIEGL), 207–227 (PFGWMFASFFGSMSVDAMLMW), and 236–256 (MAIAFLFIALVPFTKLWHIFA). 4Fe-4S ferredoxin-type domains are found at residues 293-324 (WKDLLDLDSCIRCGRCQENCPAYNTGKHLNPK) and 375-405 (YDVVGSETIWDCTNCRACMEHCPMFIEHIPK). The [4Fe-4S] cluster site is built by cysteine 302, cysteine 305, cysteine 308, cysteine 312, cysteine 386, cysteine 389, cysteine 392, and cysteine 396.

Might constitute a membrane-associated complex with EtfA (Swol_0697), EtfB (Swol_0696), and the butyryl-CoA dehydrogenase Swol_1933 and/or Swol_2052. The cofactor is [4Fe-4S] cluster.

It localises to the cell membrane. It functions in the pathway lipid metabolism; butanoate metabolism. Oxidoreductase involved in syntrophic growth of S.wolfei with butyrate. Is presumed to link the electron flow from butyryl-CoA dehydrogenases to the membrane, in conjunction with the electron transfer flavoprotein EtfAB. May transfer electrons to the menaquinone pool of the membrane. The sequence is that of EtfAB:quinone oxidoreductase from Syntrophomonas wolfei subsp. wolfei (strain DSM 2245B / Goettingen).